Consider the following 282-residue polypeptide: Pantothenate synthetase (282 aa).

32-39 contacts ATP; the sequence is MGALHEGH. Catalysis depends on His39, which acts as the Proton donor. Gln63 provides a ligand contact to (R)-pantoate. Gln63 is a beta-alanine binding site. ATP is bound at residue 149–152; sequence GEKD. Position 155 (Gln155) interacts with (R)-pantoate. ATP is bound by residues Val178 and 186 to 189; that span reads LSSR.

This sequence belongs to the pantothenate synthetase family. In terms of assembly, homodimer.

The protein resides in the cytoplasm. The catalysed reaction is (R)-pantoate + beta-alanine + ATP = (R)-pantothenate + AMP + diphosphate + H(+). It functions in the pathway cofactor biosynthesis; (R)-pantothenate biosynthesis; (R)-pantothenate from (R)-pantoate and beta-alanine: step 1/1. Catalyzes the condensation of pantoate with beta-alanine in an ATP-dependent reaction via a pantoyl-adenylate intermediate. The sequence is that of Pantothenate synthetase from Paracoccus denitrificans (strain Pd 1222).